Here is a 190-residue protein sequence, read N- to C-terminus: Ras-related protein RabF1 (190 aa).

15 to 22 (GDSGVGKT) contributes to the GTP binding site. The short motif at 37–44 (HITIGIEF) is the Effector region element. GTP is bound by residues 62-66 (DTAGE) and 119-122 (NKND). The residue at position 187 (cysteine 187) is a Cysteine methyl ester. Cysteine 187 is lipidated: S-geranylgeranyl cysteine. The propeptide at 188–190 (IIN) is removed in mature form.

This sequence belongs to the small GTPase superfamily. Rab family.

The protein resides in the cell membrane. The sequence is that of Ras-related protein RabF1 (rabF1-1) from Dictyostelium discoideum (Social amoeba).